The sequence spans 175 residues: Catabolic 3-dehydroquinase (175 aa).

The active-site Proton acceptor is tyrosine 26. Positions 104, 110, and 117 each coordinate substrate. Catalysis depends on histidine 130, which acts as the Proton donor. Substrate-binding positions include valine 131–serine 132 and arginine 141.

Belongs to the type-II 3-dehydroquinase family. In terms of assembly, homododecamer. Adopts a ring-like structure, composed of an arrangement of two hexameric rings stacked on top of one another.

It catalyses the reaction 3-dehydroquinate = 3-dehydroshikimate + H2O. The protein operates within aromatic compound metabolism; 3,4-dihydroxybenzoate biosynthesis; 3,4-dihydroxybenzoate from 3-dehydroquinate: step 1/2. Its function is as follows. Is involved in the catabolism of quinate. Allows the utilization of quinate as carbon source via the beta-ketoadipate pathway. This Sordaria macrospora (strain ATCC MYA-333 / DSM 997 / K(L3346) / K-hell) protein is Catabolic 3-dehydroquinase.